Consider the following 318-residue polypeptide: Protoheme IX farnesyltransferase (318 aa).

Helical transmembrane passes span 37-57 (VMEL…RGLP), 59-79 (IWLI…AGAF), 108-128 (EALV…WFGA), 131-151 (LAGL…TLIL), 158-178 (NIVW…AAVT), 183-203 (WPAI…YWPL), 216-238 (VPML…YTWA), 249-269 (LGHA…WFLL), and 296-316 (ISYL…GMPL).

The protein belongs to the UbiA prenyltransferase family. Protoheme IX farnesyltransferase subfamily.

It is found in the cell membrane. The catalysed reaction is heme b + (2E,6E)-farnesyl diphosphate + H2O = Fe(II)-heme o + diphosphate. It functions in the pathway porphyrin-containing compound metabolism; heme O biosynthesis; heme O from protoheme: step 1/1. In terms of biological role, converts heme B (protoheme IX) to heme O by substitution of the vinyl group on carbon 2 of heme B porphyrin ring with a hydroxyethyl farnesyl side group. This chain is Protoheme IX farnesyltransferase, found in Renibacterium salmoninarum (strain ATCC 33209 / DSM 20767 / JCM 11484 / NBRC 15589 / NCIMB 2235).